The sequence spans 679 residues: Probable metal-nicotianamine transporter YSL18 (679 aa).

Positions 1–17 (MESVGDPRDGPSTERAF) are enriched in basic and acidic residues. Residues 1–21 (MESVGDPRDGPSTERAFEGQP) form a disordered region. 14 helical membrane-spanning segments follow: residues 29–49 (VTLR…SVMM), 51–71 (LVFT…LGFF), 101–121 (CVVA…LLAM), 144–164 (FGRM…AIVP), 211–231 (LASL…NCGF), 255–275 (VGIG…GSII), 309–329 (VFCA…AISL), 379–399 (FAIS…PLMY), 407–427 (VAAA…GTGV), 441–461 (ILMF…SLVI), 497–517 (VIGT…FHHF), 547–567 (LPKY…AVCA), 593–613 (FLLV…VFLW), and 627–647 (VLAS…ALLA).

Belongs to the YSL (TC 2.A.67.2) family.

The protein resides in the membrane. In terms of biological role, may be involved in the transport of nicotianamine-chelated metals. This chain is Probable metal-nicotianamine transporter YSL18 (YSL18), found in Oryza sativa subsp. japonica (Rice).